Consider the following 225-residue polypeptide: RNA chaperone ProQ (225 aa).

The tract at residues 107–169 (KARVQAQRAA…VAAKAPREER (63 aa)) is disordered. A compositionally biased stretch (low complexity) spans 109-118 (RVQAQRAAQQ). A compositionally biased stretch (basic residues) spans 137–146 (RERKPRPQQP). Basic and acidic residues predominate over residues 147 to 156 (RRKEGAEQRK).

It belongs to the ProQ family.

It localises to the cytoplasm. In terms of biological role, RNA chaperone with significant RNA binding, RNA strand exchange and RNA duplexing activities. May regulate ProP activity through an RNA-based, post-transcriptional mechanism. The polypeptide is RNA chaperone ProQ (Klebsiella pneumoniae subsp. pneumoniae (strain ATCC 700721 / MGH 78578)).